The chain runs to 446 residues: Probable glycine dehydrogenase (decarboxylating) subunit 1 (446 aa).

Belongs to the GcvP family. N-terminal subunit subfamily. In terms of assembly, the glycine cleavage system is composed of four proteins: P, T, L and H. In this organism, the P 'protein' is a heterodimer of two subunits.

The enzyme catalyses N(6)-[(R)-lipoyl]-L-lysyl-[glycine-cleavage complex H protein] + glycine + H(+) = N(6)-[(R)-S(8)-aminomethyldihydrolipoyl]-L-lysyl-[glycine-cleavage complex H protein] + CO2. Functionally, the glycine cleavage system catalyzes the degradation of glycine. The P protein binds the alpha-amino group of glycine through its pyridoxal phosphate cofactor; CO(2) is released and the remaining methylamine moiety is then transferred to the lipoamide cofactor of the H protein. The chain is Probable glycine dehydrogenase (decarboxylating) subunit 1 from Protochlamydia amoebophila (strain UWE25).